Reading from the N-terminus, the 406-residue chain is Multifunctional CCA protein (406 aa).

Residues G8 and R11 each coordinate ATP. CTP is bound by residues G8 and R11. Mg(2+) is bound by residues D21 and D23. Residues R91, R137, and R140 each coordinate ATP. 3 residues coordinate CTP: R91, R137, and R140. In terms of domain architecture, HD spans 228–329; the sequence is TGIHTLMVAE…IKILNKFDVW (102 aa).

Belongs to the tRNA nucleotidyltransferase/poly(A) polymerase family. Bacterial CCA-adding enzyme type 1 subfamily. Monomer. Can also form homodimers and oligomers. Mg(2+) is required as a cofactor. Ni(2+) serves as cofactor.

It catalyses the reaction a tRNA precursor + 2 CTP + ATP = a tRNA with a 3' CCA end + 3 diphosphate. The catalysed reaction is a tRNA with a 3' CCA end + 2 CTP + ATP = a tRNA with a 3' CCACCA end + 3 diphosphate. Functionally, catalyzes the addition and repair of the essential 3'-terminal CCA sequence in tRNAs without using a nucleic acid template. Adds these three nucleotides in the order of C, C, and A to the tRNA nucleotide-73, using CTP and ATP as substrates and producing inorganic pyrophosphate. tRNA 3'-terminal CCA addition is required both for tRNA processing and repair. Also involved in tRNA surveillance by mediating tandem CCA addition to generate a CCACCA at the 3' terminus of unstable tRNAs. While stable tRNAs receive only 3'-terminal CCA, unstable tRNAs are marked with CCACCA and rapidly degraded. This chain is Multifunctional CCA protein, found in Vibrio parahaemolyticus serotype O3:K6 (strain RIMD 2210633).